A 340-amino-acid polypeptide reads, in one-letter code: Ribose-phosphate pyrophosphokinase (340 aa).

ATP-binding positions include 47–49 (NGE) and 106–107 (RQ). The Mg(2+) site is built by H140 and D182. K206 is a catalytic residue. D-ribose 5-phosphate contacts are provided by residues R208, D234, and 238 to 242 (DTAGT).

The protein belongs to the ribose-phosphate pyrophosphokinase family. Class I subfamily. As to quaternary structure, homohexamer. It depends on Mg(2+) as a cofactor.

The protein resides in the cytoplasm. It carries out the reaction D-ribose 5-phosphate + ATP = 5-phospho-alpha-D-ribose 1-diphosphate + AMP + H(+). It participates in metabolic intermediate biosynthesis; 5-phospho-alpha-D-ribose 1-diphosphate biosynthesis; 5-phospho-alpha-D-ribose 1-diphosphate from D-ribose 5-phosphate (route I): step 1/1. Involved in the biosynthesis of the central metabolite phospho-alpha-D-ribosyl-1-pyrophosphate (PRPP) via the transfer of pyrophosphoryl group from ATP to 1-hydroxyl of ribose-5-phosphate (Rib-5-P). The chain is Ribose-phosphate pyrophosphokinase from Bifidobacterium longum (strain NCC 2705).